A 341-amino-acid polypeptide reads, in one-letter code: Glycerol-3-phosphate dehydrogenase [NAD(P)+] 1 (341 aa).

Positions 11, 12, 32, 33, and 106 each coordinate NADPH. Residues Lys-106, Gly-137, and Ser-139 each contribute to the sn-glycerol 3-phosphate site. An NADPH-binding site is contributed by Ala-141. Residues Lys-192, Asp-245, Ser-255, Arg-256, and Asn-257 each contribute to the sn-glycerol 3-phosphate site. The active-site Proton acceptor is Lys-192. Arg-256 serves as a coordination point for NADPH. The NADPH site is built by Val-280 and Glu-282.

Belongs to the NAD-dependent glycerol-3-phosphate dehydrogenase family.

It is found in the cytoplasm. It carries out the reaction sn-glycerol 3-phosphate + NAD(+) = dihydroxyacetone phosphate + NADH + H(+). It catalyses the reaction sn-glycerol 3-phosphate + NADP(+) = dihydroxyacetone phosphate + NADPH + H(+). The protein operates within membrane lipid metabolism; glycerophospholipid metabolism. Its function is as follows. Catalyzes the reduction of the glycolytic intermediate dihydroxyacetone phosphate (DHAP) to sn-glycerol 3-phosphate (G3P), the key precursor for phospholipid synthesis. This chain is Glycerol-3-phosphate dehydrogenase [NAD(P)+] 1, found in Salinibacter ruber (strain DSM 13855 / M31).